We begin with the raw amino-acid sequence, 2280 residues long: Protein Ycf2 (2280 aa).

1631–1638 (GSIGTGRS) is an ATP binding site.

The protein belongs to the Ycf2 family.

The protein localises to the plastid. It is found in the chloroplast stroma. Functionally, probable ATPase of unknown function. Its presence in a non-photosynthetic plant (Epifagus virginiana) and experiments in tobacco indicate that it has an essential function which is probably not related to photosynthesis. In Nicotiana tomentosiformis (Tobacco), this protein is Protein Ycf2.